Here is a 377-residue protein sequence, read N- to C-terminus: Progesterone receptor (377 aa).

The interval 1–15 (EASQSPQYSFESLPQ) is modulating, Pro-Rich. The segment at residues 16-90 (KICLICGDEA…AGMVLGGRKF (75 aa)) is a DNA-binding region (nuclear receptor). NR C4-type zinc fingers lie at residues 18 to 38 (CLIC…CGSC) and 54 to 78 (CAGR…LRKC). The residue at position 127 (serine 127) is a Phosphoserine. Residues 130–364 (QDLQLIPPLI…EFPEMMSEVI (235 aa)) enclose the NR LBD domain. The segment at 138–377 (LINLLMSIEP…LPKILAGMVK (240 aa)) is AF2; mediates transcriptional activation.

It belongs to the nuclear hormone receptor family. NR3 subfamily. In terms of assembly, interacts with CUEDC2, SMARD1 and with UNC45A. Interacts with PRMT2. Interacts with NCOA2 and NCOA1. Interacts with KLF9. Interacts with GTF2B. In terms of processing, palmitoylated by ZDHHC7 and ZDHHC21. Palmitoylation is required for plasma membrane targeting and for rapid intracellular signaling via ERK and AKT kinases and cAMP generation.

Its subcellular location is the nucleus. The steroid hormones and their receptors are involved in the regulation of eukaryotic gene expression and affect cellular proliferation and differentiation in target tissues. Transcriptional activator of several progesteron-dependent promoters in a variety of cell types. Involved in activation of SRC-dependent MAPK signaling on hormone stimulation. The sequence is that of Progesterone receptor (PGR) from Ovis aries (Sheep).